A 265-amino-acid chain; its full sequence is Protein synthesis inhibitor PD-S2 (265 aa).

Disulfide bonds link cysteine 34/cysteine 262 and cysteine 88/cysteine 110. N-linked (GlcNAc...) asparagine glycosylation is present at asparagine 120.

This sequence belongs to the ribosome-inactivating protein family. Type 1 RIP subfamily. In terms of processing, glycosylated. As to expression, seeds.

It catalyses the reaction Endohydrolysis of the N-glycosidic bond at one specific adenosine on the 28S rRNA.. In terms of biological role, inhibits protein synthesis in animal cells. Useful as immunotoxin for pharmacological applications. This is Protein synthesis inhibitor PD-S2 from Phytolacca dioica (Bella sombra tree).